The sequence spans 442 residues: NAD(P)H sulfur oxidoreductase (CoA-dependent) (442 aa).

13–14 (AA) lines the FAD pocket. R24 contacts CoA. Residues 35–36 (EA) and 42–44 (HAP) each bind FAD. CoA is bound by residues 41–45 (SHAPC), 62–63 (HY), and R72. Residue C45 is the Redox-active of the active site. V82, D280, and A298 together coordinate FAD. Residues N302 and K358 each coordinate CoA. Y422 provides a ligand contact to FAD. CoA-binding residues include W430 and R438.

Belongs to the class-III pyridine nucleotide-disulfide oxidoreductase family. In terms of assembly, homodimer. Requires FAD as cofactor.

It localises to the cytoplasm. It carries out the reaction hydrogen sulfide + NADP(+) = sulfur + NADPH. The enzyme catalyses hydrogen sulfide + NAD(+) = sulfur + NADH. The catalysed reaction is NADP(+) + 2 CoA = CoA-disulfide + NADPH + H(+). It catalyses the reaction NAD(+) + 2 CoA = CoA-disulfide + NADH + H(+). In terms of biological role, catalyzes the CoA-dependent reduction of elemental sulfur (S(0)) to produce hydrogen sulfide. Can use both NADPH and NADH, but shows a preference for NADPH. May enable S(0) to be used, via sulfide, for iron-sulfur cluster synthesis by SipA. Also shows coenzyme A disulfide reductase (CoADR) activity with both NADH and NADPH. However, CoADR specific activity is about 20-fold lower than the sulfur reduction assay and CoADR activity appears to be an artifactual side reaction and is not thought to have any physiological relevance. Also shows NAD(P)H oxidase activity with both NADH and NADPH. The polypeptide is NAD(P)H sulfur oxidoreductase (CoA-dependent) (Pyrococcus furiosus (strain ATCC 43587 / DSM 3638 / JCM 8422 / Vc1)).